We begin with the raw amino-acid sequence, 517 residues long: Nuclear transcription factor Y subunit alpha (517 aa).

Polar residues predominate over residues 1-11 (MNQINYLTSER). Disordered stretches follow at residues 1–95 (MNQI…MDIH), 121–183 (RIDY…NFNY), 252–281 (ESEN…RGCG), and 304–517 (AAAN…NNRS). 2 stretches are compositionally biased toward low complexity: residues 26-81 (NNSS…SSSS) and 126-183 (NNNN…NFNY). Residues 232–255 (YVNAKQYNRILKRRAARAKLESEN) carry the Subunit association domain (SAD) motif. The NFYA/HAP2-type DNA-binding region spans 262-287 (KAYQHESRHQHAIRRQRGCGGRFLTK). Over residues 304–345 (AAANPNASSTSTTTSNITNNNNNNNNNNNTNNNNNNNNTNVN) the composition is skewed to low complexity. A compositionally biased stretch (acidic residues) spans 359–371 (SDDDIENDVENDS). 2 stretches are compositionally biased toward low complexity: residues 377–388 (KNNSNSPNQSSS) and 408–423 (NNNI…NNNN). A compositionally biased stretch (polar residues) spans 438-447 (PLLNNGHIQA). Residues 448–517 (QQNQSPSSSP…PLSNFSNNRS (70 aa)) show a composition bias toward low complexity.

Belongs to the NFYA/HAP2 subunit family. Heterotrimeric transcription factor composed of three components, nfyA, nfyB and nfyC. nfyB and nfyC must interact and dimerize for nfyA association and DNA binding.

It localises to the nucleus. Functionally, component of the NF-Y/HAP transcription factor complex. The NF-Y complex stimulates the transcription of various genes by recognizing and binding to a CCAAT motif in promoters. The sequence is that of Nuclear transcription factor Y subunit alpha (nfyA) from Dictyostelium discoideum (Social amoeba).